A 31-amino-acid polypeptide reads, in one-letter code: Photosystem II reaction center protein Psb30 (31 aa).

Residues 5–25 (IQLTSLLLIVIAGPLVIALLF) traverse the membrane as a helical segment.

Belongs to the Psb30/Ycf12 family. PSII is composed of 1 copy each of membrane proteins PsbA, PsbB, PsbC, PsbD, PsbE, PsbF, PsbH, PsbI, PsbJ, PsbK, PsbL, PsbM, PsbT, PsbX, PsbY, PsbZ, Psb30/Ycf12, peripheral proteins of the oxygen-evolving complex and a large number of cofactors. It forms dimeric complexes.

The protein resides in the plastid. It is found in the chloroplast thylakoid membrane. A core subunit of photosystem II (PSII), probably helps stabilize the reaction center. This chain is Photosystem II reaction center protein Psb30, found in Phacus acuminatus.